The chain runs to 352 residues: Zinc transporter 1 (352 aa).

The signal sequence occupies residues 1 to 29; sequence MARTMTMRVSSLLVAVVLLAALSFQACSG. The Extracellular segment spans residues 30–56; the sequence is HGGINDGDGQVDAPATPASSSGVRSKG. A helical transmembrane segment spans residues 57–77; the sequence is LIAVKVWCLVILLVFTFAGGV. Residues 78–87 lie on the Cytoplasmic side of the membrane; the sequence is SPYFYRWNES. A helical transmembrane segment spans residues 88-108; sequence FLLLGTQFAAGVFLGTALMHF. At 109–127 the chain is on the extracellular side; that stretch reads LADSTSTFKGLTTNQYPFS. The helical transmembrane segment at 128–148 threads the bilayer; sequence FMLTCVGFLLTMLSDLVIAAV. The Cytoplasmic portion of the chain corresponds to 149–200; the sequence is ARRSAAAGVSDNQVSEQQQRQQAEGAVMSRKEEEAAAVAHPAMLVRTSSFED. A helical membrane pass occupies residues 201–221; that stretch reads AVLLIVALCFHSVFEGIAIGV. At 222 to 230 the chain is on the extracellular side; sequence SASKSEAWR. Residues 231-251 form a helical membrane-spanning segment; the sequence is NLWTIGLHKIFAAVAMGIALL. Topologically, residues 252 to 262 are cytoplasmic; sequence RMIPKRPFLMT. A helical transmembrane segment spans residues 263–283; it reads VVYSLAFAVSSPVGVGIGIAI. At 284 to 296 the chain is on the extracellular side; that stretch reads DATSQGRAADWTY. The chain crosses the membrane as a helical span at residues 297 to 317; it reads AISMGLATGVFIYVAINHLIA. Residues 318–330 lie on the Cytoplasmic side of the membrane; the sequence is KGYRPHHPTAADK. Residues 331 to 351 form a helical membrane-spanning segment; the sequence is PLFKFLAVLLGVAVMAVVMIW. Position 352 (Asp352) is a topological domain, extracellular.

This sequence belongs to the ZIP transporter (TC 2.A.5) family. As to expression, expressed in vascular bundles of roots and leaves.

It is found in the cell membrane. Its function is as follows. Zinc transporter that may mediate zinc uptake from the rhizosphere. May also transport other divalent cations. The polypeptide is Zinc transporter 1 (ZIP1) (Oryza sativa subsp. japonica (Rice)).